The sequence spans 968 residues: RNA polymerase-associated protein RapA (968 aa).

Residues 163–332 (EVGRRYAPRV…FARLRLLDPD (170 aa)) form the Helicase ATP-binding domain. 176 to 183 (DEVGLGKT) provides a ligand contact to ATP. A DEAH box motif is present at residues 278 to 281 (DEAH). The Helicase C-terminal domain maps to 491 to 655 (RVDWLIEFLK…EFAEDLLNVL (165 aa)).

It belongs to the SNF2/RAD54 helicase family. RapA subfamily. Interacts with the RNAP. Has a higher affinity for the core RNAP than for the holoenzyme. Its ATPase activity is stimulated by binding to RNAP.

Functionally, transcription regulator that activates transcription by stimulating RNA polymerase (RNAP) recycling in case of stress conditions such as supercoiled DNA or high salt concentrations. Probably acts by releasing the RNAP, when it is trapped or immobilized on tightly supercoiled DNA. Does not activate transcription on linear DNA. Probably not involved in DNA repair. The sequence is that of RNA polymerase-associated protein RapA from Shewanella sp. (strain ANA-3).